The sequence spans 157 residues: Ribosome maturation factor RimP (157 aa).

Belongs to the RimP family.

It is found in the cytoplasm. In terms of biological role, required for maturation of 30S ribosomal subunits. The polypeptide is Ribosome maturation factor RimP (Limosilactobacillus reuteri (strain DSM 20016) (Lactobacillus reuteri)).